We begin with the raw amino-acid sequence, 78 residues long: Large ribosomal subunit protein bL28 (78 aa).

Residues 1 to 21 (MSRVCQVTGKRPVSGNNRSHA) form a disordered region.

It belongs to the bacterial ribosomal protein bL28 family.

In Sodalis glossinidius (strain morsitans), this protein is Large ribosomal subunit protein bL28.